The chain runs to 613 residues: Chaperone protein DnaK (613 aa).

Threonine 173 bears the Phosphothreonine; by autocatalysis mark. Residues 577 to 613 (AKQAQAQQEGGAEGAQKADDNVVDAEYEEVNDDQEKK) are disordered. Residues 597–613 (NVVDAEYEEVNDDQEKK) show a composition bias toward acidic residues.

The protein belongs to the heat shock protein 70 family.

In terms of biological role, acts as a chaperone. This chain is Chaperone protein DnaK, found in Bacillus pumilus (strain SAFR-032).